Reading from the N-terminus, the 703-residue chain is RING finger protein 214 (703 aa).

Disordered regions lie at residues 1–59 (MAAS…TITK), 104–134 (GSQS…VTRS), and 146–197 (SRNC…SSSL). An N-acetylalanine modification is found at A2. 4 positions are modified to phosphoserine: S15, S40, S47, and S54. Positions 37 to 59 (TKDSAQKQKNSPLLSVSSQTITK) are enriched in polar residues. Residues S176 and S196 each carry the phosphoserine modification. Residues 220–379 (QDIEKNLDKM…AEKEAELHLT (160 aa)) are a coiled coil. The interval 486-552 (FPILNPALSQ…SAETPRPQPV (67 aa)) is disordered. Residues 493 to 504 (LSQPSQPSSPLP) are compositionally biased toward low complexity. Phosphoserine is present on residues S497, S511, and S516. Over residues 523–536 (PHMPPAASIPPPPG) the composition is skewed to pro residues. The RING-type; atypical zinc-finger motif lies at 658-700 (CLMCQKLVQPSELHPMACTHVLHKECIKFWAQTNTNDTCPFCP).

The chain is RING finger protein 214 (RNF214) from Homo sapiens (Human).